The sequence spans 1889 residues: Bromodomain adjacent to zinc finger domain protein 2A (1889 aa).

Disordered regions lie at residues 1 to 59 (MEME…NGLS), 384 to 433 (FGLN…SPAA), and 479 to 526 (TTPV…GAVA). Residues 35 to 59 (TNGSPMNFPQQGKSLNGDVNVNGLS) are compositionally biased toward polar residues. The tract at residues 332 to 726 (EGNPVISALD…ESQTPVQGQA (395 aa)) is required for TTF1 binding. Over residues 423–433 (PAVSPTASPAA) the composition is skewed to low complexity. 2 stretches are compositionally biased toward polar residues: residues 479-489 (TTPVTSPQGSP) and 498-509 (QTVSPARKNVSS). At threonine 499 the chain carries Phosphothreonine. At serine 501 the chain carries Phosphoserine. One can recognise an MBD domain in the interval 538-609 (IATPEEVRLP…EHFSFSPRMP (72 aa)). The residue at position 540 (threonine 540) is a Phosphothreonine. Serine 605 bears the Phosphoserine mark. The disordered stretch occupies residues 638-791 (QAITGKRGRP…ARPSCRADKT (154 aa)). 2 consecutive DNA-binding regions (a.T hook) follow at residues 641-653 (TGKR…NEKA) and 662-674 (KRGR…IKMP). Basic and acidic residues predominate over residues 648 to 660 (RNNEKAKNKEVPK). Positions 661–670 (VKRGRGRPPK) are enriched in basic residues. Position 672 is an N6-acetyllysine; by KAT8 (lysine 672). Basic and acidic residues predominate over residues 678-701 (NKTDNRLPKKLETQEILSEDDKAK). Residues 686–813 (KKLETQEILS…QQAILEEMKK (128 aa)) adopt a coiled-coil conformation. Positions 702–713 (MTKNKKKMRQKV) are enriched in basic residues. Residues 716 to 726 (GESQTPVQGQA) show a composition bias toward polar residues. Composition is skewed to basic and acidic residues over residues 731–740 (KQDTKSLKQK) and 748–791 (AEKE…ADKT). Residue lysine 790 is modified to N6-acetyllysine. The DDT domain maps to 839–904 (SRAFSDCLTI…LKAALHDPGL (66 aa)). Residue lysine 857 forms a Glycyl lysine isopeptide (Lys-Gly) (interchain with G-Cter in SUMO2) linkage. Positions 1039–1063 (EETSGIEEEEEEENTTAVHGRRGRK) are disordered. A Phosphoserine modification is found at serine 1042. Residues 1042 to 1052 (SGIEEEEEEEN) show a composition bias toward acidic residues. Glycyl lysine isopeptide (Lys-Gly) (interchain with G-Cter in SUMO2) cross-links involve residues lysine 1141 and lysine 1163. Disordered regions lie at residues 1147–1247 (LMEV…GQSQ) and 1269–1397 (LSSS…GRPP). Phosphoserine is present on serine 1174. Positions 1176–1188 (ARSRGRPRKPKPG) form a DNA-binding region, a.T hook 3. Composition is skewed to polar residues over residues 1190–1231 (LQPQ…QPSS), 1269–1278 (LSSSVLTPDS), and 1331–1346 (DQPT…SKPM). Serine 1374, serine 1377, and serine 1383 each carry phosphoserine. The segment at residues 1390-1402 (PKRRGRPPSKFFK) is a DNA-binding region (a.T hook 4). Phosphoserine is present on serine 1545. Glycyl lysine isopeptide (Lys-Gly) (interchain with G-Cter in SUMO2) cross-links involve residues lysine 1662 and lysine 1695. Residues 1662–1712 (KVTCLVCRKGDNDEFLLLCDGCDRGCHIYCHRPKMEAVPEGDWFCAVCLSQ) form a PHD-type zinc finger. The tract at residues 1720 to 1778 (QRPGFPKRGQKRKSSFPLTFPEGDSRRRMLSRSRDSPAVPRYPEDGLSPPKRRRHSMRS) is disordered. Phosphoserine is present on serine 1733. Threonine 1738 carries the post-translational modification Phosphothreonine. Basic and acidic residues predominate over residues 1742–1754 (GDSRRRMLSRSRD). Phosphoserine occurs at positions 1755 and 1767. The segment covering 1769-1778 (PKRRRHSMRS) has biased composition (basic residues). Positions 1777-1881 (RSHHSDLTFC…RFFESRWEEF (105 aa)) constitute a Bromo domain.

The protein belongs to the WAL family. In terms of assembly, component of the NoRC-1 ISWI chromatin remodeling complex at least composed of SMARCA1 and BAZ2A/TIP5, which regulates the spacing of histone octamers on the DNA template to facilitate access to DNA. Within the NoRC-1 ISWI chromatin remodeling complex interacts with SMARCA1; the interaction is direct. Component of the NoRC-5 ISWI chromatin remodeling complex (also called the NoRC nucleolar-remodeling complex), at least composed of SMARCA5/SNF2H and BAZ2A/TIP5, which regulates the spacing of histone octamers on the DNA template to facilitate access to DNA. Within the NoRC-5 ISWI chromatin remodeling complexes interacts with SMARCA5/SNF2H; the interaction is direct. Interacts with TTF1; the interaction is required for recruitment of the NoRC-5 ISWI chromatin remodeling complex to rDNA. Interacts with HDAC1. Interacts with SIN3A. Interacts with DNMT1 and DNM3B. Interacts with BEND3 and USP21. In terms of processing, ubiquitinated. Deubiquitinated by USP21 leading to its stabilization. Acetylation at Lys-672 by KAT8/MOF promotes its dissociation from pRNA, affecting heterochromatin formation, nucleosome positioning and rDNA silencing. Deacetylation by SIRT1 in late S phase enhances pRNA-binding, allowing de novo DNA methylation and heterochromatin formation. Acetylation is high during S phase and declines to background levels in late S phase when the silent copies of rRNA genes are replicated.

The protein localises to the nucleus. The protein resides in the nucleolus. In terms of biological role, regulatory subunit of the ATP-dependent NoRC-1 and NoRC-5 ISWI chromatin remodeling complexes, which form ordered nucleosome arrays on chromatin and facilitate access to DNA during DNA-templated processes such as DNA replication, transcription, and repair. Both complexes regulate the spacing of nucleosomes along the chromatin and have the ability to slide mononucleosomes to the center of a DNA template. Directly stimulates the ATPase activity of SMARCA5 in the NoRC-5 ISWI chromatin remodeling complex. The NoRC-1 ISWI chromatin remodeling complex has a lower ATP hydrolysis rate than the NoRC-5 ISWI chromatin remodeling complex. Within the NoRC-5 ISWI chromatin remodeling complex, mediates silencing of a fraction of rDNA by recruiting histone-modifying enzymes and DNA methyltransferases, leading to heterochromatin formation and transcriptional silencing. In the complex, it plays a central role by being recruited to rDNA and by targeting chromatin modifying enzymes such as HDAC1, leading to repress RNA polymerase I transcription. Recruited to rDNA via its interaction with TTF1 and its ability to recognize and bind histone H4 acetylated on 'Lys-16' (H4K16ac), leading to deacetylation of H4K5ac, H4K8ac, H4K12ac but not H4K16ac. Specifically binds pRNAs, 150-250 nucleotide RNAs that are complementary in sequence to the rDNA promoter; pRNA-binding is required for heterochromatin formation and rDNA silencing. This chain is Bromodomain adjacent to zinc finger domain protein 2A (Baz2a), found in Mus musculus (Mouse).